We begin with the raw amino-acid sequence, 201 residues long: DNA polymerase epsilon subunit C (201 aa).

Disordered regions lie at residues 102–165 (KKRE…KSTR) and 178–201 (SALD…STDP). The segment covering 117–144 (VVIEEPELHEDDGVEEEEEEDEVSEEEE) has biased composition (acidic residues). Composition is skewed to basic and acidic residues over residues 145 to 164 (PVHN…DKST) and 182 to 201 (VGEH…STDP). Residues Ser-186, Ser-188, and Ser-189 each carry the phosphoserine modification.

In terms of assembly, DNA polymerase epsilon is a heterotetramer consisting of POL2, DPB2, DPB3 and DPB4.

The protein resides in the nucleus. Its function is as follows. As accessory component of the DNA polymerase epsilon (DNA polymerase II) participates in chromosomal DNA replication. It is required during synthesis of the leading and lagging DNA strands at the replication fork and binds at/or near replication origins and moves along DNA with the replication fork. It has 3'-5' proofreading exonuclease activity that correct errors arising during DNA replication. It is also involved in DNA synthesis during DNA repair. The protein is DNA polymerase epsilon subunit C (DPB3) of Saccharomyces cerevisiae (strain ATCC 204508 / S288c) (Baker's yeast).